We begin with the raw amino-acid sequence, 411 residues long: Argininosuccinate lyase (411 aa).

The protein belongs to the lyase 1 family. Argininosuccinate lyase subfamily.

The protein localises to the cytoplasm. It carries out the reaction 2-(N(omega)-L-arginino)succinate = fumarate + L-arginine. It functions in the pathway amino-acid biosynthesis; L-arginine biosynthesis; L-arginine from L-ornithine and carbamoyl phosphate: step 3/3. This chain is Argininosuccinate lyase, found in Legionella pneumophila subsp. pneumophila (strain Philadelphia 1 / ATCC 33152 / DSM 7513).